The primary structure comprises 478 residues: Aspartate ammonia-lyase (478 aa).

Thr-104, Ser-143, Thr-144, Asn-145, and Thr-190 together coordinate L-aspartate. The segment at 320-329 (GSSIMPAKVN) is SS loop. Ser-321 serves as the catalytic Proton acceptor. 2 residues coordinate L-aspartate: Ser-322 and Lys-327.

The protein belongs to the class-II fumarase/aspartase family. Aspartase subfamily. As to quaternary structure, homotetramer.

It carries out the reaction L-aspartate = fumarate + NH4(+). Catalyzes the reversible conversion of L-aspartate to fumarate and ammonia. In Escherichia coli O157:H7, this protein is Aspartate ammonia-lyase (aspA).